Consider the following 473-residue polypeptide: Mitochondrial distribution and morphology protein 10 (473 aa).

This sequence belongs to the MDM10 family. In terms of assembly, component of the ER-mitochondria encounter structure (ERMES) or MDM complex, composed of MMM1, MDM10, MDM12 and MDM34. Associates with the mitochondrial outer membrane sorting assembly machinery SAM(core) complex.

It localises to the mitochondrion outer membrane. Component of the ERMES/MDM complex, which serves as a molecular tether to connect the endoplasmic reticulum and mitochondria. Components of this complex are involved in the control of mitochondrial shape and protein biogenesis and may function in phospholipid exchange. MDM10 is involved in the late assembly steps of the general translocase of the mitochondrial outer membrane (TOM complex). Functions in the TOM40-specific route of the assembly of outer membrane beta-barrel proteins, including the association of TOM40 with the receptor TOM22 and small TOM proteins. Can associate with the SAM(core) complex as well as the MDM12-MMM1 complex, both involved in late steps of the major beta-barrel assembly pathway, that is responsible for biogenesis of all outer membrane beta-barrel proteins. May act as a switch that shuttles between both complexes and channels precursor proteins into the TOM40-specific pathway. Plays a role in mitochondrial morphology and in the inheritance of mitochondria. This is Mitochondrial distribution and morphology protein 10 from Candida albicans (strain WO-1) (Yeast).